The primary structure comprises 1346 residues: DNA-directed RNA polymerase subunit beta (1346 aa).

Belongs to the RNA polymerase beta chain family. As to quaternary structure, the RNAP catalytic core consists of 2 alpha, 1 beta, 1 beta' and 1 omega subunit. When a sigma factor is associated with the core the holoenzyme is formed, which can initiate transcription.

It catalyses the reaction RNA(n) + a ribonucleoside 5'-triphosphate = RNA(n+1) + diphosphate. Functionally, DNA-dependent RNA polymerase catalyzes the transcription of DNA into RNA using the four ribonucleoside triphosphates as substrates. This Psychromonas ingrahamii (strain DSM 17664 / CCUG 51855 / 37) protein is DNA-directed RNA polymerase subunit beta.